Here is a 254-residue protein sequence, read N- to C-terminus: Ditrans,polycis-undecaprenyl-diphosphate synthase ((2E,6E)-farnesyl-diphosphate specific) (254 aa).

Residue Asp-25 is part of the active site. Asp-25 contacts Mg(2+). Substrate-binding positions include 26-29 (GNGR), Trp-30, Arg-38, His-42, and 70-72 (SSE). Asn-73 acts as the Proton acceptor in catalysis. Positions 74, 76, and 193 each coordinate substrate. Position 198 (His-198) interacts with Mg(2+). 199–201 (RIS) contributes to the substrate binding site. Glu-212 is a Mg(2+) binding site.

Belongs to the UPP synthase family. Homodimer. Mg(2+) serves as cofactor.

It carries out the reaction 8 isopentenyl diphosphate + (2E,6E)-farnesyl diphosphate = di-trans,octa-cis-undecaprenyl diphosphate + 8 diphosphate. Functionally, catalyzes the sequential condensation of isopentenyl diphosphate (IPP) with (2E,6E)-farnesyl diphosphate (E,E-FPP) to yield (2Z,6Z,10Z,14Z,18Z,22Z,26Z,30Z,34E,38E)-undecaprenyl diphosphate (di-trans,octa-cis-UPP). UPP is the precursor of glycosyl carrier lipid in the biosynthesis of bacterial cell wall polysaccharide components such as peptidoglycan and lipopolysaccharide. In Photorhabdus laumondii subsp. laumondii (strain DSM 15139 / CIP 105565 / TT01) (Photorhabdus luminescens subsp. laumondii), this protein is Ditrans,polycis-undecaprenyl-diphosphate synthase ((2E,6E)-farnesyl-diphosphate specific).